Reading from the N-terminus, the 1153-residue chain is Myosin-3 (1153 aa).

The Myosin N-terminal SH3-like domain occupies 104-153; that stretch reads KKVLQFWVQLPNGNWELGKIMSTSGEESVIVVTEGKVLKVKSETLVPANP. The Myosin motor domain occupies 157 to 829; the sequence is DGVDDLMQLS…QIGVLEDTRN (673 aa). ATP is bound by residues 248-255 and 296-304; these read GESGAGKT and NDNSSRFGK. Actin-binding regions lie at residues 581 to 615 and 709 to 731; these read LFEK…KQHL and LFQL…KPNN. IQ domains lie at 831–860, 854–883, and 903–932; these read TLHG…GITI, LKTG…RHRA, and TVDA…LSSG. Residues 948–996 adopt a coiled-coil conformation; that stretch reads YLSDLQRRVLRTEAALREKEEENDILRQRVQQYDNRWSEYETKMKSMEE. Residues 1020 to 1050 are disordered; sequence DSARNSDASVNASDATDLDSGGSHYQMGHGR. Polar residues predominate over residues 1024 to 1033; the sequence is NSDASVNASD.

Belongs to the TRAFAC class myosin-kinesin ATPase superfamily. Myosin family. Plant myosin class VIII subfamily. In terms of assembly, homodimer.

Functionally, myosin heavy chain that is required for the cell cycle-regulated transport of various organelles and proteins for their segregation. Functions by binding with its tail domain to receptor proteins on organelles and exerting force with its N-terminal motor domain against actin filaments, thereby transporting its cargo along polarized actin cables. This Arabidopsis thaliana (Mouse-ear cress) protein is Myosin-3 (VIII-A).